A 220-amino-acid polypeptide reads, in one-letter code: Sugar transporter SWEET1 (220 aa).

The next 7 helical transmembrane spans lie at 9-29 (LMTF…IMPL), 44-64 (VAGL…SYAL), 70-90 (TMLF…FNYW), 106-126 (VMIA…NTVD), 138-158 (LSSV…AIVI), 167-187 (IINV…FGLL), and 191-211 (IYIY…LTLI). The region spanning 12–92 (FIQFCATFIT…IYYVFNYWKN (81 aa)) is the MtN3/slv 1 domain. The 84-residue stretch at 134-217 (RLGFLSSVVC…LTLIKLYPPQ (84 aa)) folds into the MtN3/slv 2 domain.

The protein belongs to the SWEET sugar transporter family.

It localises to the golgi apparatus membrane. The protein resides in the cell membrane. Functionally, mediates both low-affinity uptake and efflux of sugar across the membrane. The chain is Sugar transporter SWEET1 (slc50a1) from Dictyostelium discoideum (Social amoeba).